A 285-amino-acid chain; its full sequence is Isoprenyl transferase 2 (285 aa).

Residues Arg-11 to Pro-30 are disordered. Asp-43 is a catalytic residue. Asp-43 provides a ligand contact to Mg(2+). Residues Gly-44–Arg-47, Trp-48, Arg-56, His-60, and Ser-88–Glu-90 contribute to the substrate site. The Proton acceptor role is filled by Asn-91. Substrate contacts are provided by residues Trp-92, Arg-94, Arg-211, and Arg-217–Ser-219. Residue Glu-230 participates in Mg(2+) binding.

Belongs to the UPP synthase family. In terms of assembly, homodimer. It depends on Mg(2+) as a cofactor.

Functionally, catalyzes the condensation of isopentenyl diphosphate (IPP) with allylic pyrophosphates generating different type of terpenoids. In Streptomyces avermitilis (strain ATCC 31267 / DSM 46492 / JCM 5070 / NBRC 14893 / NCIMB 12804 / NRRL 8165 / MA-4680), this protein is Isoprenyl transferase 2.